A 191-amino-acid polypeptide reads, in one-letter code: MFSAQNKIHKDKGVAPTEFEERVAQAFFDLENTNQELKSDLKDLYINQAVSMDIAGNRKAVVIYVPFRLRKAFRKIHSRLVRELEKKFSGNDVIFVATRRIMRPPKKGSAVQRPRNRTLTSVHEAMLEDVAYPAEIVGKRTRYRVDGTKIMKVYLEPKERNNTEYKLETMVGVYRKLTGKDVVFEYPVADP.

Met1 carries the N-acetylmethionine modification.

The protein belongs to the eukaryotic ribosomal protein eS7 family.

The sequence is that of Small ribosomal subunit protein eS7 (RPS7) from Brassica oleracea (Wild cabbage).